Consider the following 439-residue polypeptide: Trigger factor (439 aa).

A PPIase FKBP-type domain is found at G162–P247.

The protein belongs to the FKBP-type PPIase family. Tig subfamily.

Its subcellular location is the cytoplasm. It carries out the reaction [protein]-peptidylproline (omega=180) = [protein]-peptidylproline (omega=0). Its function is as follows. Involved in protein export. Acts as a chaperone by maintaining the newly synthesized protein in an open conformation. Functions as a peptidyl-prolyl cis-trans isomerase. This Dichelobacter nodosus (strain VCS1703A) protein is Trigger factor.